Reading from the N-terminus, the 88-residue chain is Small ribosomal subunit protein bS20 (88 aa).

Belongs to the bacterial ribosomal protein bS20 family.

Its function is as follows. Binds directly to 16S ribosomal RNA. This chain is Small ribosomal subunit protein bS20, found in Oenococcus oeni (strain ATCC BAA-331 / PSU-1).